The following is a 245-amino-acid chain: Zinc import ATP-binding protein ZnuC (245 aa).

The ABC transporter domain occupies 27–244 (LTADSLTLFY…AKFLSVFPNN (218 aa)). Position 59 to 66 (59 to 66 (GPNGGGKT)) interacts with ATP.

The protein belongs to the ABC transporter superfamily. Zinc importer (TC 3.A.1.15.5) family. The complex is composed of two ATP-binding proteins (ZnuC), two transmembrane proteins (ZnuB) and a solute-binding protein (ZnuA).

It localises to the cell inner membrane. It catalyses the reaction Zn(2+)(out) + ATP(in) + H2O(in) = Zn(2+)(in) + ADP(in) + phosphate(in) + H(+)(in). Part of the ABC transporter complex ZnuABC involved in zinc import. Responsible for energy coupling to the transport system. This Anaplasma marginale (strain St. Maries) protein is Zinc import ATP-binding protein ZnuC.